We begin with the raw amino-acid sequence, 326 residues long: Vomeronasal type-1 receptor 94 (326 aa).

Topologically, residues 1–32 (MSEILLFSPQPLFSYTMNKYSRLYTNSNIRNT) are extracellular. Residues 33–53 (FFSEIGIGIAANSLLLLFHIF) traverse the membrane as a helical segment. The Cytoplasmic segment spans residues 54–65 (KFIRGQRSRLTD). The helical transmembrane segment at 66–86 (LPIGLLSLIHLLKLLMIAFIA) threads the bilayer. The Extracellular portion of the chain corresponds to 87–110 (TDIFISWRGWDDIICKFLVYLYRS). An intrachain disulfide couples Cys-101 to Cys-188. Residues 111–130 (FRGLSLCTTCMLSVLQAITL) traverse the membrane as a helical segment. At 131 to 150 (SPRSSCLAKFKHKSPHHVSC) the chain is on the cytoplasmic side. A helical membrane pass occupies residues 151–171 (AILSLSVLYMFISSHLLVSLI). Residues 172 to 203 (ATPNLTTNVFMYVSESCSILPMSYLMQSMFST) lie on the Extracellular side of the membrane. Asn-175 carries N-linked (GlcNAc...) asparagine glycosylation. A helical membrane pass occupies residues 204–224 (LLAIRDVFLISLMVLSTCYMV). Over 225–254 (ALLCRHRKQTRHLQGTSLSPKASPEKKATH) the chain is Cytoplasmic. A helical membrane pass occupies residues 255-275 (SILMLMSFFVLMSILDSIVSC). The Extracellular segment spans residues 276 to 285 (SRTMFLYDPT). Residues 286 to 306 (SYAIQIFVSHIYATVSPFVFM) traverse the membrane as a helical segment. The Cytoplasmic portion of the chain corresponds to 307-326 (SNEKHIVNFLRSLCKRVINV).

The protein belongs to the G-protein coupled receptor 1 family.

The protein localises to the cell membrane. In terms of biological role, putative pheromone receptor implicated in the regulation of social as well as reproductive behavior. This Rattus norvegicus (Rat) protein is Vomeronasal type-1 receptor 94 (Vom1r94).